The chain runs to 194 residues: Holliday junction branch migration complex subunit RuvA (194 aa).

Residues 1–64 (MIGRLRGILA…EDSVSLYGFL (64 aa)) form a domain I region. Residues 65–140 (REGERRLFRD…RAADFSSGAP (76 aa)) form a domain II region. Residues 140–144 (PITGQ) are flexible linker. Residues 145–194 (LGPDAVSEATVALQQLGYKPAEAARMARDAGAEGDEVATVIRKALQAALR) form a domain III region.

This sequence belongs to the RuvA family. As to quaternary structure, homotetramer. Forms an RuvA(8)-RuvB(12)-Holliday junction (HJ) complex. HJ DNA is sandwiched between 2 RuvA tetramers; dsDNA enters through RuvA and exits via RuvB. An RuvB hexamer assembles on each DNA strand where it exits the tetramer. Each RuvB hexamer is contacted by two RuvA subunits (via domain III) on 2 adjacent RuvB subunits; this complex drives branch migration. In the full resolvosome a probable DNA-RuvA(4)-RuvB(12)-RuvC(2) complex forms which resolves the HJ.

The protein resides in the cytoplasm. Its function is as follows. The RuvA-RuvB-RuvC complex processes Holliday junction (HJ) DNA during genetic recombination and DNA repair, while the RuvA-RuvB complex plays an important role in the rescue of blocked DNA replication forks via replication fork reversal (RFR). RuvA specifically binds to HJ cruciform DNA, conferring on it an open structure. The RuvB hexamer acts as an ATP-dependent pump, pulling dsDNA into and through the RuvAB complex. HJ branch migration allows RuvC to scan DNA until it finds its consensus sequence, where it cleaves and resolves the cruciform DNA. The sequence is that of Holliday junction branch migration complex subunit RuvA from Xanthomonas axonopodis pv. citri (strain 306).